The primary structure comprises 308 residues: Maspardin (308 aa).

The AB hydrolase-1 domain occupies 87–159 (FCDGFRKLLD…NSFWLMPAFM (73 aa)).

It belongs to the AB hydrolase superfamily. Interacts with CD4. Interacts with ALDH16A1.

The protein localises to the cytoplasm. Functionally, may play a role as a negative regulatory factor in CD4-dependent T-cell activation. In Macaca fascicularis (Crab-eating macaque), this protein is Maspardin (SPG21).